Here is a 91-residue protein sequence, read N- to C-terminus: Probable Fe(2+)-trafficking protein (91 aa).

The protein belongs to the Fe(2+)-trafficking protein family.

Functionally, could be a mediator in iron transactions between iron acquisition and iron-requiring processes, such as synthesis and/or repair of Fe-S clusters in biosynthetic enzymes. In Cellvibrio japonicus (strain Ueda107) (Pseudomonas fluorescens subsp. cellulosa), this protein is Probable Fe(2+)-trafficking protein.